The chain runs to 445 residues: MSTMTDIGASGALHRTRSKPWYKVLYVQVLIAIVLGVLLGWVSPHLATNPWIKALGDGFVKLIKMVIAPIIFCTVVSGIAHIQDARKVGRVGVKALLYFEVVSSFALILGLIVGNLVPVGHGLAAKPDAGAVAKYVDQASHMSSVDFFLNIIPESVVGAFAKGDILQVLLFAILFGFALMALGERGHRLRDVIDDTAHAVFGVIAIVMKAAPVGAFGAMAFTIGKYGPAALGNLIGLVALFYATAALFVFVVLGLIAKFVGFNIFRFVGYIKDELLIVLGTSSSESALPQLMEKLERLGCSKSVVGLVVPTGYSFNLDGTNIYMTLATLFIAQALGIELTFTEQVTILLVAMLTSKGASGVTGAGFVTLAGTLAAVNPALVPGMAIVFSIDKFMSEVRALTNITGNGVATVFVSWWEGELDHDRLQANLNRTIDPSDVETAITTG.

8 consecutive transmembrane segments (helical) span residues 24–44 (VLYVQVLIAIVLGVLLGWVSP), 62–82 (LIKMVIAPIIFCTVVSGIAHI), 105–125 (FALILGLIVGNLVPVGHGLAA), 163–183 (GDILQVLLFAILFGFALMALG), 201–221 (FGVIAIVMKAAPVGAFGAMAF), 237–257 (LVALFYATAALFVFVVLGLIA), 322–342 (IYMTLATLFIAQALGIELTFT), and 370–390 (AGTLAAVNPALVPGMAIVFSI).

This sequence belongs to the dicarboxylate/amino acid:cation symporter (DAACS) (TC 2.A.23) family.

The protein localises to the cell inner membrane. Responsible for the transport of dicarboxylates such as succinate, fumarate, and malate from the periplasm across the membrane. This is C4-dicarboxylate transport protein from Rhodopseudomonas palustris (strain BisB5).